The sequence spans 619 residues: Adagio protein 3 (619 aa).

The PAS domain maps to 44 to 123; it reads VGMFYYPMTP…SEIRRCLEEG (80 aa). The residue at position 91 (cysteine 91) is an S-4a-FMN cysteine. The 42-residue stretch at 127 to 168 folds into the PAC domain; it reads QGELLNFRKDGTPLVNRLRLAPIRDDDGTITHVIGIQVFSET. The 47-residue stretch at 211-257 folds into the F-box domain; it reads ILQLSDEVLAHNILSRLTPRDVASIGSACRRLRQLTKNESVRKMVCQ. Kelch repeat units lie at residues 304-354, 357-404, 409-457, 462-513, and 523-571; these read SRCN…TSSP, RWGH…AGGT, RSWH…PTSW, RLGH…ECSA, and RLDH…NVPG.

The protein belongs to the ADAGIO family. In terms of assembly, interacts with ADO1 (via Kelch repeats), ADO2 (via Kelch repeats), SKP1A/ASK1, SKP1B/ASK2, ASK3, SKP1K/ASK11, ASK12, ASK13 and SKP1N/ASK14. Interacts (via Kelch repeats) with CDF1, CDF2 and CDF3. Interacts (via N-terminus) with CO and GI (via N-terminus) in a blue-light-dependent manner. Post-translationally, FMN binds covalently to cysteine after exposure to blue light and is reversed in the dark. As to expression, highly expressed in stomata and leaves and to a lower extent in seeds, roots, rosettes, stems and siliques. Also present in sepals and anther filaments.

The protein localises to the nucleus. It is found in the cytoplasm. The protein operates within protein modification; protein ubiquitination. In terms of biological role, component of an E3 ubiquitin ligase complex that plays a central role in blue light-dependent circadian cycles. Acts as a blue light photoreceptor, due to the presence of FMN, that mediates light-regulated protein degradation of critical clock components by targeting them to the proteasome complex. The SCF(ADO3) E3 ubiquitin ligase complex is involved in the regulation of circadian clock-dependent processes including transition to flowering time, hypocotyl elongation, cotyledons and leaf movement rhythms. Forms a complex with 'GIGANTEA' (GI) to regulate 'CONSTANS' (CO) expression. Promotes CO expression during the light period of long days by decreasing the stability of CDF1 and CDF2 and by interacting directly with the CO protein and stabilizing it. ADO3 function is mainly GI dependent. Does not act as a regulator of CDF1 transcription. The interactions of ADO1/ZTL and ADO2 with ADO3 prevent its interaction with CDF1. The polypeptide is Adagio protein 3 (ADO3) (Arabidopsis thaliana (Mouse-ear cress)).